Reading from the N-terminus, the 122-residue chain is Insulin-like growth factor 1 (122 aa).

The b stretch occupies residues 49-77; it reads GPETLCGAELVDALQFVCGDRGFYFNKPT. Cystine bridges form between Cys-54–Cys-96, Cys-66–Cys-109, and Cys-95–Cys-100. Residues 78-89 are c; that stretch reads GYGSSSRRAPQT. Positions 90 to 110 are a; sequence GIVDECCFRSCDLRRLEMYCA. The d stretch occupies residues 111–118; it reads PLKPAKSA. Residues 119 to 122 constitute a propeptide, e peptide; sequence RSVR.

The protein belongs to the insulin family. As to quaternary structure, forms a ternary complex with IGFR1 and ITGAV:ITGB3. Forms a ternary complex with IGFR1 and ITGA6:ITGB4. Forms a ternary complex with IGFBP3 and ALS.

The protein localises to the secreted. Functionally, the insulin-like growth factors, isolated from plasma, are structurally and functionally related to insulin but have a much higher growth-promoting activity. May be a physiological regulator of [1-14C]-2-deoxy-D-glucose (2DG) transport and glycogen synthesis in osteoblasts. Stimulates glucose transport in bone-derived osteoblastic (PyMS) cells and is effective at much lower concentrations than insulin, not only regarding glycogen and DNA synthesis but also with regard to enhancing glucose uptake. May play a role in synapse maturation. Ca(2+)-dependent exocytosis of IGF1 is required for sensory perception of smell in the olfactory bulb. Acts as a ligand for IGF1R. Binds to the alpha subunit of IGF1R, leading to the activation of the intrinsic tyrosine kinase activity which autophosphorylates tyrosine residues in the beta subunit thus initiating a cascade of down-stream signaling events leading to activation of the PI3K-AKT/PKB and the Ras-MAPK pathways. Binds to integrins ITGAV:ITGB3 and ITGA6:ITGB4. Its binding to integrins and subsequent ternary complex formation with integrins and IGFR1 are essential for IGF1 signaling. Induces the phosphorylation and activation of IGFR1, MAPK3/ERK1, MAPK1/ERK2 and AKT1. As part of the MAPK/ERK signaling pathway, acts as a negative regulator of apoptosis in cardiomyocytes via promotion of STUB1/CHIP-mediated ubiquitination and degradation of ICER-type isoforms of CREM. In Equus caballus (Horse), this protein is Insulin-like growth factor 1.